The primary structure comprises 310 residues: Malate dehydrogenase (310 aa).

NAD(+) is bound by residues 7–12 and Asp32; that span reads GAGHVG. Residues Arg81 and Arg87 each coordinate substrate. Residues Asn94 and 117-119 contribute to the NAD(+) site; that span reads VSN. The substrate site is built by Asn119 and Arg150. The Proton acceptor role is filled by His174.

Belongs to the LDH/MDH superfamily. MDH type 3 family.

The enzyme catalyses (S)-malate + NAD(+) = oxaloacetate + NADH + H(+). Catalyzes the reversible oxidation of malate to oxaloacetate. The sequence is that of Malate dehydrogenase from Chlorobium phaeobacteroides (strain BS1).